The sequence spans 634 residues: Probable threonine--tRNA ligase, cytoplasmic (634 aa).

The TGS domain maps to 1-61 (MSIYVTFKGQ…NENQKIELYD (61 aa)).

It belongs to the class-II aminoacyl-tRNA synthetase family.

The protein resides in the cytoplasm. The catalysed reaction is tRNA(Thr) + L-threonine + ATP = L-threonyl-tRNA(Thr) + AMP + diphosphate + H(+). In Enterocytozoon bieneusi (strain H348) (Microsporidian parasite), this protein is Probable threonine--tRNA ligase, cytoplasmic.